We begin with the raw amino-acid sequence, 270 residues long: 3-methyl-2-oxobutanoate hydroxymethyltransferase (270 aa).

Mg(2+) contacts are provided by Asp42 and Asp86. 3-methyl-2-oxobutanoate contacts are provided by residues 42-43 (DS), Asp86, and Lys116. Glu118 serves as a coordination point for Mg(2+). The active-site Proton acceptor is Glu185.

This sequence belongs to the PanB family. In terms of assembly, homodecamer; pentamer of dimers. It depends on Mg(2+) as a cofactor.

The protein resides in the cytoplasm. The enzyme catalyses 3-methyl-2-oxobutanoate + (6R)-5,10-methylene-5,6,7,8-tetrahydrofolate + H2O = 2-dehydropantoate + (6S)-5,6,7,8-tetrahydrofolate. It functions in the pathway cofactor biosynthesis; (R)-pantothenate biosynthesis; (R)-pantoate from 3-methyl-2-oxobutanoate: step 1/2. Catalyzes the reversible reaction in which hydroxymethyl group from 5,10-methylenetetrahydrofolate is transferred onto alpha-ketoisovalerate to form ketopantoate. The chain is 3-methyl-2-oxobutanoate hydroxymethyltransferase from Synechococcus sp. (strain CC9902).